Consider the following 1418-residue polypeptide: Sterol 3-beta-glucosyltransferase (1418 aa).

Positions 1 to 16 (MRPFLDDAKRRVDRKL) are enriched in basic and acidic residues. Disordered stretches follow at residues 1–59 (MRPF…SREG), 83–188 (ARFD…RSAT), and 207–233 (LKAS…ASVS). Over residues 18–28 (ASRQSLSTSRL) the composition is skewed to polar residues. 2 stretches are compositionally biased toward basic and acidic residues: residues 35-44 (DRLKDNHDAQ) and 95-105 (SEQRPRKESSV). Polar residues predominate over residues 106 to 115 (RKGTSASANT). Positions 116–126 (SSPLDSSQRSS) are enriched in low complexity. 2 stretches are compositionally biased toward basic and acidic residues: residues 127 to 139 (SRTD…ESGT) and 147 to 166 (TISD…HEPQ). Residues 209–219 (ASSTERSQPSL) show a composition bias toward polar residues. The region spanning 249 to 288 (EKVLVEYACSLLQSILLQGYMYVTEGHICFYAYLPKKSTV) is the GRAM 1 domain. The region spanning 289 to 387 (AIKSGYLYKR…WVKALQKVIF (99 aa)) is the PH domain. Positions 462–651 (ISSQHLSPQP…DPTKSFSGAP (190 aa)) are disordered. Over residues 486-497 (RWSLTSGTSRVL) the composition is skewed to polar residues. Low complexity predominate over residues 508–519 (ASASTSHTSLAH). Polar residues predominate over residues 534-575 (SESILNSFEQGTESSAAWQSMTDAAESASQILNRSDVFQSPT). Residues 578 to 598 (GLDRRPSGGERRGRRNSDETA) are compositionally biased toward basic and acidic residues. Polar residues predominate over residues 599-612 (RSLSTRANVGTGQQ). Over residues 615 to 633 (ELGRRMDGDTSGREARDST) the composition is skewed to basic and acidic residues. Over residues 635–651 (ESDQYTQDPTKSFSGAP) the composition is skewed to polar residues. Residues 733-799 (DRFRAHFALP…RDIENVEKEK (67 aa)) enclose the GRAM 2 domain. The UDP-alpha-D-glucose site is built by S920, R921, D923, A1223, H1225, H1238, G1242, T1243, D1262, and Q1263. Positions 1339 to 1418 (SIASSTPFSP…SGPGRKLSGR (80 aa)) are disordered. The segment covering 1341 to 1355 (ASSTPFSPTPSAKTT) has biased composition (low complexity). A compositionally biased stretch (acidic residues) spans 1358–1379 (QDADDDVEDSEEWTFVGDDTDM). Residues 1380-1391 (EMSRRLRDRAIS) show a composition bias toward basic and acidic residues.

Belongs to the glycosyltransferase 28 family.

The protein localises to the cytoplasm. It localises to the preautophagosomal structure membrane. It carries out the reaction a sterol + UDP-alpha-D-glucose = a sterol 3-beta-D-glucoside + UDP + H(+). The enzyme catalyses ergosterol + UDP-alpha-D-glucose = ergosteryl 3-beta-D-glucoside + UDP + H(+). Sterol glycosyltransferase responsible for the glycosylation of ergosterol to form ergosterol-glucoside. The polypeptide is Sterol 3-beta-glucosyltransferase (Neosartorya fischeri (strain ATCC 1020 / DSM 3700 / CBS 544.65 / FGSC A1164 / JCM 1740 / NRRL 181 / WB 181) (Aspergillus fischerianus)).